A 545-amino-acid polypeptide reads, in one-letter code: MAAKDVKFGSDARIKMLEGVNVLANAVKVTLGPKGRNVVLDKSFGAPTITKDGVSVAKEIELEDKFQNMGAQMVKEVASQANDAAGDGTTTATVLAQSIITEGLKAVAAGMNPMDLKRGIDKAVLAAVEELKTLSVPCADTKAIAQVGTISANSDENVGKLIAEAMDKVGRDGVITVEDGQGLQDELAVVEGMQFDRGYLSPYFINKQDTASVELDDPFILLVDKKVSNIREMLSVLEGVAKAGKPLVIIAEDVEGEALATLVVNTMRGIVKVAAVKAPGFGDRRKAMLQDIAILTAGTVISEEIGMELEKATLEELGRAKRIVITKENTTIIDGVGEAATIEARIAQIRQQIEESSSDYDKEKLQERVAKLAGGVAVIKVGATTEVEMKEKKARVEDALHATRAAVEEGVVAGGGVALVRAAAKLADLKGDNEDQTVGIRVALRAMESPLRQIVDNAGEEPSVVANRVREGEGNFGYNAATEVYGDMLEMGILDPTKVTRLALQFAASVAGLMITTECMITDAPKKDAPAMPDMGGMGGMGGMM.

ATP is bound by residues 30–33 (TLGP), Lys51, 87–91 (DGTTT), Gly415, 479–481 (NAA), and Asp495.

Belongs to the chaperonin (HSP60) family. In terms of assembly, forms a cylinder of 14 subunits composed of two heptameric rings stacked back-to-back. Interacts with the co-chaperonin GroES.

Its subcellular location is the cytoplasm. The catalysed reaction is ATP + H2O + a folded polypeptide = ADP + phosphate + an unfolded polypeptide.. Functionally, together with its co-chaperonin GroES, plays an essential role in assisting protein folding. The GroEL-GroES system forms a nano-cage that allows encapsulation of the non-native substrate proteins and provides a physical environment optimized to promote and accelerate protein folding. The polypeptide is Chaperonin GroEL (Tolumonas auensis (strain DSM 9187 / NBRC 110442 / TA 4)).